We begin with the raw amino-acid sequence, 365 residues long: tRNA-specific 2-thiouridylase MnmA (365 aa).

Residues 9-16 (GLSGGVDS) and M35 contribute to the ATP site. The interaction with target base in tRNA stretch occupies residues 95–97 (NPD). The active-site Nucleophile is the C100. The cysteines at positions 100 and 196 are disulfide-linked. G124 contacts ATP. An interaction with tRNA region spans residues 146–148 (KDQ). Residue C196 is the Cysteine persulfide intermediate of the active site. Residues 315–316 (RY) are interaction with tRNA.

The protein belongs to the MnmA/TRMU family.

The protein localises to the cytoplasm. It catalyses the reaction S-sulfanyl-L-cysteinyl-[protein] + uridine(34) in tRNA + AH2 + ATP = 2-thiouridine(34) in tRNA + L-cysteinyl-[protein] + A + AMP + diphosphate + H(+). Its function is as follows. Catalyzes the 2-thiolation of uridine at the wobble position (U34) of tRNA, leading to the formation of s(2)U34. This Dechloromonas aromatica (strain RCB) protein is tRNA-specific 2-thiouridylase MnmA.